The primary structure comprises 669 residues: Pre-mRNA-processing factor 39 (669 aa).

A compositionally biased stretch (basic and acidic residues) spans 1–10 (MQNSHMDEYR). Positions 1–23 (MQNSHMDEYRNSSNGSTGNSSEV) are disordered. The span at 11 to 23 (NSSNGSTGNSSEV) shows a compositional bias: low complexity. Ser44 is subject to Phosphoserine. 7 HAT repeats span residues 109-141 (NHLMAARKAFDRFFIHYPYCYGYWKKYADLEKR), 143-175 (DNIKPSDEVYRRGLQAIPLSVDLWIHYINFLKE), 183-218 (ETNNTIRGTFEHAVLAAGTDFRSDRLWEMYINWENE), 220-253 (GNLREVTAIYDRILGIPTQLYSHHFQRFKEHVQN), 333-365 (TFEEGIKRPYFHVKPLEKAQLKNWKEYLEFEIE), 367-399 (GTHERVVVLFERCVISCALYEEFWIKYAKYMEN), and 404-436 (GVRHVFSRACTIHLPKKPMVHMLWAAFEEQQGN). Residues 599–624 (KEQDSLKRKAENGSEEPEEKKAHTED) show a composition bias toward basic and acidic residues. Residues 599 to 634 (KEQDSLKRKAENGSEEPEEKKAHTEDTTSSSTQMID) form a disordered region. Residues 625-634 (TTSSSTQMID) show a composition bias toward polar residues.

It belongs to the PRP39 family.

It localises to the nucleus. Its function is as follows. Involved in pre-mRNA splicing. The polypeptide is Pre-mRNA-processing factor 39 (PRPF39) (Homo sapiens (Human)).